The sequence spans 776 residues: Endonuclease MutS2 (776 aa).

An ATP-binding site is contributed by 330 to 337 (GPNTGGKT). The Smr domain maps to 701–776 (LDLRGMRYEE…GSGATIAILK (76 aa)).

Belongs to the DNA mismatch repair MutS family. MutS2 subfamily. Homodimer. Binds to stalled ribosomes, contacting rRNA.

Its function is as follows. Endonuclease that is involved in the suppression of homologous recombination and thus may have a key role in the control of bacterial genetic diversity. In terms of biological role, acts as a ribosome collision sensor, splitting the ribosome into its 2 subunits. Detects stalled/collided 70S ribosomes which it binds and splits by an ATP-hydrolysis driven conformational change. Acts upstream of the ribosome quality control system (RQC), a ribosome-associated complex that mediates the extraction of incompletely synthesized nascent chains from stalled ribosomes and their subsequent degradation. Probably generates substrates for RQC. This is Endonuclease MutS2 from Lactococcus lactis subsp. cremoris (strain SK11).